A 283-amino-acid chain; its full sequence is Methylamine utilization ferredoxin-type protein MauN (283 aa).

2 4Fe-4S ferredoxin-type domains span residues 208 to 239 (LRVTAEQSGSCAGCGSCIRVCPEPHVLAPVVS) and 241 to 270 (KANTVTHGDCTRCGACLDQCATGALAMKLD). Residues Cys-218, Cys-221, Cys-224, Cys-228, Cys-250, Cys-253, Cys-256, and Cys-260 each coordinate [4Fe-4S] cluster.

Its pathway is one-carbon metabolism; methylamine degradation. Its function is as follows. Involved in electron transfer. This chain is Methylamine utilization ferredoxin-type protein MauN (mauN), found in Methylobacillus flagellatus (strain ATCC 51484 / DSM 6875 / VKM B-1610 / KT).